The sequence spans 80 residues: Putative defensin-like protein 28 (80 aa).

The signal sequence occupies residues 1 to 22; it reads MLRANVVVSLVIFAALMQCMNG.

It belongs to the DEFL family.

It is found in the secreted. This is Putative defensin-like protein 28 from Arabidopsis thaliana (Mouse-ear cress).